The primary structure comprises 621 residues: Probable bifunctional dTTP/UTP pyrophosphatase/methyltransferase protein (621 aa).

The segment at 11 to 223 (LHKRVVLASA…PPRPEDLRRS (213 aa)) is MAF-like. Ser-21 carries the post-translational modification Phosphoserine. The active-site Proton acceptor; for pyrophosphatase activity is the Asp-88. Ser-228 carries the phosphoserine modification. A Phosphothreonine modification is found at Thr-234. Positions 235 to 279 (FEDLSDVEGGGSEPTQRDAGSRDEKAEAGEAGQATAEAECHRTRE) are disordered. Ser-239 carries the post-translational modification Phosphoserine. Over residues 249 to 262 (TQRDAGSRDEKAEA) the composition is skewed to basic and acidic residues. The tract at residues 277 to 621 (TRETLPPFPT…DAILATKVAP (345 aa)) is ASMT-like. Ser-421 carries the phosphoserine modification. S-adenosyl-L-methionine contacts are provided by residues Asp-482, 508–510 (GDF), and Arg-525.

It in the N-terminal section; belongs to the Maf family. YhdE subfamily. The protein in the C-terminal section; belongs to the class I-like SAM-binding methyltransferase superfamily. Cation-independent O-methyltransferase family. In terms of assembly, homodimer. Requires a divalent metal cation as cofactor. As to expression, widely expressed. In adult, highly expressed in pancreas, placenta, fibroblast, thymus, prostate, testis, ovary and colon. Expressed at lower levels in spleen, small intestine and leukocytes. In fetus, expressed at high levels in the lung and kidney and at lower level in brain and liver.

The enzyme catalyses dTTP + H2O = dTMP + diphosphate + H(+). The catalysed reaction is UTP + H2O = UMP + diphosphate + H(+). It catalyses the reaction CTP + H2O = CMP + diphosphate + H(+). It carries out the reaction psi-UTP + H2O = psi-UMP + diphosphate + H(+). The enzyme catalyses 5-methyl-UTP + H2O = 5-methyl-UMP + diphosphate + H(+). The catalysed reaction is 5-methyl-CTP + H2O = 5-methyl-CMP + diphosphate + H(+). Nucleoside triphosphate pyrophosphatase that hydrolyzes dTTP and UTP. Can also hydrolyze CTP and the modified nucleotides pseudo-UTP, 5-methyl-UTP (m(5)UTP) and 5-methyl-CTP (m(5)CTP). Has weak activity with dCTP, 8-oxo-GTP and N(4)-methyl-dCTP. May have a dual role in cell division arrest and in preventing the incorporation of modified nucleotides into cellular nucleic acids. In addition, the presence of the putative catalytic domain of S-adenosyl-L-methionine binding in the C-terminal region argues for a methyltransferase activity. The polypeptide is Probable bifunctional dTTP/UTP pyrophosphatase/methyltransferase protein (ASMTL) (Homo sapiens (Human)).